Consider the following 352-residue polypeptide: Phosphoribosylformylglycinamidine cyclo-ligase (352 aa).

It belongs to the AIR synthase family.

Its subcellular location is the cytoplasm. The catalysed reaction is 2-formamido-N(1)-(5-O-phospho-beta-D-ribosyl)acetamidine + ATP = 5-amino-1-(5-phospho-beta-D-ribosyl)imidazole + ADP + phosphate + H(+). It participates in purine metabolism; IMP biosynthesis via de novo pathway; 5-amino-1-(5-phospho-D-ribosyl)imidazole from N(2)-formyl-N(1)-(5-phospho-D-ribosyl)glycinamide: step 2/2. In Pseudomonas putida (strain GB-1), this protein is Phosphoribosylformylglycinamidine cyclo-ligase.